The chain runs to 94 residues: Phosphoribosyl-ATP pyrophosphatase (94 aa).

The protein belongs to the PRA-PH family.

The protein resides in the cytoplasm. The enzyme catalyses 1-(5-phospho-beta-D-ribosyl)-ATP + H2O = 1-(5-phospho-beta-D-ribosyl)-5'-AMP + diphosphate + H(+). It participates in amino-acid biosynthesis; L-histidine biosynthesis; L-histidine from 5-phospho-alpha-D-ribose 1-diphosphate: step 2/9. The sequence is that of Phosphoribosyl-ATP pyrophosphatase from Pyrobaculum calidifontis (strain DSM 21063 / JCM 11548 / VA1).